A 415-amino-acid chain; its full sequence is Phosphoglycerate transport system transcriptional regulatory protein PgtA (415 aa).

The Response regulatory domain maps to 7-121 (SILLIDDDVD…KLLILIEDAL (115 aa)). D56 is subject to 4-aspartylphosphate. One can recognise a Sigma-54 factor interaction domain in the interval 142–341 (LIGRSEWMNQ…LANAAELFAV (200 aa)). 170–177 (GEHGTGRM) contacts ATP. Residues 385-404 (INEVAEYLQIPRKKLYLRMK) constitute a DNA-binding region (H-T-H motif).

Post-translationally, phosphorylated by PgtB.

Its subcellular location is the cytoplasm. Functionally, member of the two-component regulatory system PgtB/PgtA that regulates the inducible phosphoglycerate transport system. When activated by PgtB it acts in conjunction with sigma-54 as a transcriptional activator. The protein is Phosphoglycerate transport system transcriptional regulatory protein PgtA (pgtA) of Salmonella typhimurium (strain LT2 / SGSC1412 / ATCC 700720).